Consider the following 136-residue polypeptide: Translation initiation factor 5A (136 aa).

At Lys37 the chain carries Hypusine.

The protein belongs to the eIF-5A family.

It is found in the cytoplasm. In terms of biological role, functions by promoting the formation of the first peptide bond. The chain is Translation initiation factor 5A (eIF5A) from Thermococcus gammatolerans (strain DSM 15229 / JCM 11827 / EJ3).